A 326-amino-acid chain; its full sequence is uncharacterized protein (326 aa).

It belongs to the ParB family.

This is an uncharacterized protein from Acidianus two-tailed virus (ATV).